We begin with the raw amino-acid sequence, 373 residues long: Cystathionine gamma-synthase/O-acetylhomoserine (thiol)-lyase (373 aa).

Position 197 is an N6-(pyridoxal phosphate)lysine (Lys197).

It belongs to the trans-sulfuration enzymes family. Homotetramer. It depends on pyridoxal 5'-phosphate as a cofactor.

It localises to the cytoplasm. It catalyses the reaction O-acetyl-L-homoserine + L-cysteine = L,L-cystathionine + acetate + H(+). It carries out the reaction O-acetyl-L-homoserine + hydrogen sulfide = L-homocysteine + acetate. It participates in amino-acid biosynthesis; L-methionine biosynthesis via de novo pathway. Catalyzes the formation of L-cystathionine from O-acetyl-L-homoserine and L-cysteine. Cannot use O-succinyl-L-homoserine as substrate. Also exhibits O-acetylhomoserine thiolyase activity, catalyzing the synthesis of L-homocysteine from O-acetyl-L-homoserine and sulfide. This chain is Cystathionine gamma-synthase/O-acetylhomoserine (thiol)-lyase (metI), found in Bacillus subtilis (strain 168).